The chain runs to 1295 residues: Phosphoribosylformylglycinamidine synthase (1295 aa).

Positions 305-327 are disordered; the sequence is WPGAATGSGGEIRDEGATGRGAK. ATP is bound by residues 307-318 and Ala678; that span reads GAATGSGGEIRD. Positions 718, 722, and 884 each coordinate Mg(2+). Residue Ser886 coordinates ATP. The region spanning 1042-1295 is the Glutamine amidotransferase type-1 domain; the sequence is VAVLREQGVN…IFRNARKQLG (254 aa). Cys1135 (nucleophile) is an active-site residue. Residues His1260 and Glu1262 contribute to the active site.

The protein in the N-terminal section; belongs to the FGAMS family. In terms of assembly, monomer.

Its subcellular location is the cytoplasm. It catalyses the reaction N(2)-formyl-N(1)-(5-phospho-beta-D-ribosyl)glycinamide + L-glutamine + ATP + H2O = 2-formamido-N(1)-(5-O-phospho-beta-D-ribosyl)acetamidine + L-glutamate + ADP + phosphate + H(+). It functions in the pathway purine metabolism; IMP biosynthesis via de novo pathway; 5-amino-1-(5-phospho-D-ribosyl)imidazole from N(2)-formyl-N(1)-(5-phospho-D-ribosyl)glycinamide: step 1/2. Its function is as follows. Phosphoribosylformylglycinamidine synthase involved in the purines biosynthetic pathway. Catalyzes the ATP-dependent conversion of formylglycinamide ribonucleotide (FGAR) and glutamine to yield formylglycinamidine ribonucleotide (FGAM) and glutamate. The chain is Phosphoribosylformylglycinamidine synthase from Escherichia coli (strain UTI89 / UPEC).